Reading from the N-terminus, the 264-residue chain is NAD kinase 1 (264 aa).

Asp45 functions as the Proton acceptor in the catalytic mechanism. NAD(+) is bound by residues Asp45–Gly46, Gly46, Asn122–Glu123, Arg148, Asp150, Ser158, Thr161–Ser166, and His223.

This sequence belongs to the NAD kinase family. Homotetramer. It depends on a divalent metal cation as a cofactor.

Its subcellular location is the cytoplasm. It catalyses the reaction NAD(+) + ATP = ADP + NADP(+) + H(+). Its activity is regulated as follows. Competitively inhibited by 5'-thioacetyladenosine (TAA) and di-(5'-thioadenosine) (DTA). Its function is as follows. Involved in the regulation of the intracellular balance of NAD and NADP, and is a key enzyme in the biosynthesis of NADP. Catalyzes specifically the phosphorylation on 2'-hydroxyl of the adenosine moiety of NAD to yield NADP. This Listeria monocytogenes serovar 1/2a (strain ATCC BAA-679 / EGD-e) protein is NAD kinase 1.